Reading from the N-terminus, the 656-residue chain is Putative L-type lectin-domain containing receptor kinase V.2 (656 aa).

The signal sequence occupies residues 1 to 23 (MSLLLKMLLFSLFFFYMASISQC). The Extracellular portion of the chain corresponds to 24–276 (SDPTGGQFSF…EDQERSLSSK (253 aa)). The tract at residues 29–248 (GQFSFNGYLY…SHYILGWSFN (220 aa)) is legume-lectin like. Residues Asn78, Asn124, Asn159, Asn190, and Asn257 are each glycosylated (N-linked (GlcNAc...) asparagine). A helical transmembrane segment spans residues 277–297 (ILAISLSISGVTLVIVLILGV). Over 298-656 (MLFLKRKKFL…MTESFLSSGR (359 aa)) the chain is Cytoplasmic. The region spanning 334 to 615 (FKNSEVLGKG…GVATLPHNLL (282 aa)) is the Protein kinase domain. ATP contacts are provided by residues 340-348 (LGKGGFGKV) and Lys363. Asp459 acts as the Proton acceptor in catalysis.

The protein in the C-terminal section; belongs to the protein kinase superfamily. Ser/Thr protein kinase family. In the N-terminal section; belongs to the leguminous lectin family.

The protein localises to the cell membrane. The enzyme catalyses L-seryl-[protein] + ATP = O-phospho-L-seryl-[protein] + ADP + H(+). It carries out the reaction L-threonyl-[protein] + ATP = O-phospho-L-threonyl-[protein] + ADP + H(+). The sequence is that of Putative L-type lectin-domain containing receptor kinase V.2 (LECRK52) from Arabidopsis thaliana (Mouse-ear cress).